The primary structure comprises 161 residues: Ribosome maturation factor RimP (161 aa).

Belongs to the RimP family.

The protein resides in the cytoplasm. Required for maturation of 30S ribosomal subunits. The sequence is that of Ribosome maturation factor RimP from Myxococcus xanthus (strain DK1622).